Here is a 382-residue protein sequence, read N- to C-terminus: Probable protein phosphatase 2C 65 (382 aa).

Residues 47–337 (HVSMSIKQGK…DDCAVVVLYL (291 aa)) form the PPM-type phosphatase domain. Mn(2+)-binding residues include aspartate 83 and glycine 84. Residues 107–126 (KIRSSKSAGDENIENNSSQS) form a disordered region. Mn(2+) contacts are provided by aspartate 282 and aspartate 328.

This sequence belongs to the PP2C family. Mg(2+) is required as a cofactor. It depends on Mn(2+) as a cofactor.

The enzyme catalyses O-phospho-L-seryl-[protein] + H2O = L-seryl-[protein] + phosphate. It carries out the reaction O-phospho-L-threonyl-[protein] + H2O = L-threonyl-[protein] + phosphate. The polypeptide is Probable protein phosphatase 2C 65 (Arabidopsis thaliana (Mouse-ear cress)).